We begin with the raw amino-acid sequence, 156 residues long: Cyanate hydratase (156 aa).

Active-site residues include arginine 96, glutamate 99, and serine 122.

This sequence belongs to the cyanase family.

The catalysed reaction is cyanate + hydrogencarbonate + 3 H(+) = NH4(+) + 2 CO2. In terms of biological role, catalyzes the reaction of cyanate with bicarbonate to produce ammonia and carbon dioxide. The protein is Cyanate hydratase of Escherichia coli O7:K1 (strain IAI39 / ExPEC).